The chain runs to 388 residues: MTVLPKTLLLLGSGELGKEITIAAQRLGCHVIACDRYSGAPAMQVADQAEVLDMNNSEALTAIIRHHQPDVVIPEIEALAVNALAELENEGITVIPTARATAITMNRDRIRDLASAELALLTPKFAYAGSAEELKHAAEPLGWPVVVKPVMSSSGKGQSVVSNPEGLRQAWQAAMAGSRGNSPRVIVEEFLHFDLEITLLTIRQEDGSTLFCEPIGHEQIGGDYQCSWQPAELSTEQLKQAQSMALTITKNLGGVGLFGVEFFLCGNEVIFSELSPRPHDTGLVTLISQNLSEFELHLRAVLNLPIPTIQTADAAASRVILAKDNLSSISYKGVEKALSEIDTQILLFGKPNARPGRRMGVALAKGKSMEAVRSKADRAAASIQVIKG.

N(1)-(5-phospho-beta-D-ribosyl)glycinamide-binding positions include 15–16 and E75; that span reads EL. ATP-binding positions include R107, K148, 153 to 158, 188 to 191, and E196; these read SSGKGQ and EEFL. In terms of domain architecture, ATP-grasp spans 112–302; it reads DLASAELALL…EFELHLRAVL (191 aa). Mg(2+) is bound by residues E261 and E273. Residues D280, K350, and 357–358 each bind N(1)-(5-phospho-beta-D-ribosyl)glycinamide; that span reads RR.

Belongs to the PurK/PurT family. In terms of assembly, homodimer.

The catalysed reaction is N(1)-(5-phospho-beta-D-ribosyl)glycinamide + formate + ATP = N(2)-formyl-N(1)-(5-phospho-beta-D-ribosyl)glycinamide + ADP + phosphate + H(+). Its pathway is purine metabolism; IMP biosynthesis via de novo pathway; N(2)-formyl-N(1)-(5-phospho-D-ribosyl)glycinamide from N(1)-(5-phospho-D-ribosyl)glycinamide (formate route): step 1/1. Involved in the de novo purine biosynthesis. Catalyzes the transfer of formate to 5-phospho-ribosyl-glycinamide (GAR), producing 5-phospho-ribosyl-N-formylglycinamide (FGAR). Formate is provided by PurU via hydrolysis of 10-formyl-tetrahydrofolate. This chain is Formate-dependent phosphoribosylglycinamide formyltransferase, found in Prochlorococcus marinus (strain MIT 9313).